A 900-amino-acid chain; its full sequence is Alanine--tRNA ligase (900 aa).

The Zn(2+) site is built by His587, His591, Cys691, and His695.

This sequence belongs to the class-II aminoacyl-tRNA synthetase family. Zn(2+) serves as cofactor.

It is found in the cytoplasm. It catalyses the reaction tRNA(Ala) + L-alanine + ATP = L-alanyl-tRNA(Ala) + AMP + diphosphate. In terms of biological role, catalyzes the attachment of alanine to tRNA(Ala) in a two-step reaction: alanine is first activated by ATP to form Ala-AMP and then transferred to the acceptor end of tRNA(Ala). Also edits incorrectly charged Ser-tRNA(Ala) and Gly-tRNA(Ala) via its editing domain. This chain is Alanine--tRNA ligase, found in Aeropyrum pernix (strain ATCC 700893 / DSM 11879 / JCM 9820 / NBRC 100138 / K1).